A 744-amino-acid chain; its full sequence is MQTYLSTKSIEYYLKELKEIFSQIWLKPSEIEKRCEELFKRSKEFDYKRILVSGETDNTTLYVIEDSSKIHVFSPNRDLRENPLLMRWHPSWYEIESKEIYYKCFLSCEELYEHLELPTVTLVNLCVIENFPIPRLNLSTGTLSSYLRKEQLAKVELIDMQVGTTINQIIKNLLDSQPDIIGLSVNFGQKKLAFEILDLIYSHIENGDLSSIITVGNVIPSFSPEQFFERYPSLLICDKEGEYTLRDLIKMLKKELKLDEVNGISYVDESGEVKHNVAETVNFKEEVPTPSLDILGEISKFRGALTLETSRGCDYSRCTFCPRDHKLRSWRPLSVEQTLKQLDDILRAGKHFNIKPHIYMADEEFIGELPNGTEAQRIIDICEGLLKREEKIKFDFAARADSVYEPKRTKEWNVERLKMWHYCALAGADRIFIGVESGSNQQLKRYGKGTTSEQNIIALRLVSALGINLRIGFIMFDQLMKGLDNLKENLDFLERTDALMKPIDIGDMTYEELYDKLLNDKEFIEKHKTGKPVYTIVSYMLASMEILMNTPYSRMVQLTERKEEVNLIMNDGKPDMNMGRYATSFVDKTNGNLSEACQMWIDSNFGVMYTIKSLHKVANPREKKKLYSYMETHREISHFLLKYLVYNLSPDKESQIILSDFLRMHSMEHILDNSKINVGDGSKENILNVMTNWQLIMEKLLRDVEADLNKGIITDSEDHRLHNTLKRWFSDMGNWSLINAYELN.

Positions 119–259 constitute a B12-binding domain; that stretch reads TVTLVNLCVI…KMLKKELKLD (141 aa). Positions 135, 139, 184, 241, 242, and 308 each coordinate cob(II)alamin. One can recognise a Radical SAM core domain in the interval 299 to 545; the sequence is SKFRGALTLE…IVSYMLASME (247 aa). [4Fe-4S] cluster contacts are provided by Cys-313, Cys-318, and Cys-321. Cob(II)alamin is bound by residues Pro-322, His-325, Lys-326, Ala-361, and Glu-363. Positions 436 and 545 each coordinate S-adenosyl-L-methionine.

Belongs to the radical SAM superfamily. [4Fe-4S] cluster serves as cofactor. The cofactor is cob(II)alamin.

It carries out the reaction dAMP + S-adenosyl-L-methionine = 4'-phospho-dehydrooxetanocin + 5'-deoxyadenosine + L-methionine + H(+). It catalyses the reaction AH2 + 2 S-adenosyl-L-methionine = 2 5'-deoxyadenosin-5'-yl radical + 2 L-methionine + A + 2 H(+). The catalysed reaction is 2 5'-deoxyadenosin-5'-yl radical + 2 dAMP + A = 2 4'-phospho-dehydrooxetanocin + 2 5'-deoxyadenosine + AH2. With respect to regulation, requires OxsA for the oxidative ring contraction activity. Activation of OxsB requires its direct interaction with OxsA and is independent of OxsA phosphohydrolase activity. In contrast to ring contraction, methylation does not require the presence of OxsA. In terms of biological role, isomerase involved in the biosynthesis of oxetanocin A (OXT-A), a nucleoside analog with antitumor, antiviral and antibacterial properties. Catalyzes an oxidative ring contraction of dAMP, forming an oxetane aldehyde. In addition, shows methyltransferase activity in vitro and is able to catalyze the radical mediated, stereoselective C2'-methylation of dAMP to form methylated 2'-dAMP. Also catalyzes the demethylation of S-adenosyl-L-methionine (SAM) to S-adenosyl-L-homocysteine (SAH). This is 4'-phospho-dehydrooxetanocin synthase from Priestia megaterium (Bacillus megaterium).